Here is an 860-residue protein sequence, read N- to C-terminus: DNA mismatch repair protein MutS (860 aa).

607-614 contacts ATP; the sequence is GPNMSGKS.

The protein belongs to the DNA mismatch repair MutS family.

This protein is involved in the repair of mismatches in DNA. It is possible that it carries out the mismatch recognition step. This protein has a weak ATPase activity. The sequence is that of DNA mismatch repair protein MutS from Listeria monocytogenes serovar 1/2a (strain ATCC BAA-679 / EGD-e).